A 1824-amino-acid polypeptide reads, in one-letter code: Afadin (1824 aa).

The Ras-associating 1 domain occupies 39 to 133; sequence FHGVMRFYFQ…GRFVLKNEND (95 aa). A disordered region spans residues 128-194; the sequence is LKNENDAIPP…DRPFQGEDVE (67 aa). Positions 146–185 form a coiled coil; it reads EKQEKEGVIQNFKRTLSKKEKKEKKKREKEALRQASDKDD. The segment covering 160-172 has biased composition (basic residues); the sequence is TLSKKEKKEKKKR. Residues 173–189 are compositionally biased toward basic and acidic residues; sequence EKEALRQASDKDDRPFQ. Phosphoserine is present on residues Ser216, Ser246, and Ser256. One can recognise a Ras-associating 2 domain in the interval 246–348; it reads SGGTLRIYAD…LVFQLKRRPP (103 aa). A compositionally biased stretch (basic and acidic residues) spans 349–371; sequence DHIPKKTKKHLEGKTPKGKERAD. A disordered region spans residues 349-378; the sequence is DHIPKKTKKHLEGKTPKGKERADGSGYGST. Phosphoserine is present on residues Ser391 and Ser424. The region spanning 426–492 is the FHA domain; the sequence is TEVGTEKLDD…LQSGMKVQFG (67 aa). Phosphoserine is present on residues Ser512, Ser557, Ser562, Ser589, and Ser655. The interval 534–595 is disordered; the sequence is FDLGGDIHSG…RQESRTQDAS (62 aa). Over residues 580–591 the composition is skewed to basic and acidic residues; the sequence is QQPDYRRQESRT. Residues 668–908 form the Dilute domain; the sequence is NKMVSMMEGV…IENVVTVAEN (241 aa). The PDZ domain occupies 1007-1093; the sequence is IITVTLKKQN…VVTLEVAKQG (87 aa). Phosphoserine occurs at positions 1083, 1107, 1126, 1140, 1143, 1172, 1173, 1182, and 1199. Residues 1107–1223 are disordered; the sequence is SPMMQRISDR…PRPEAYPIPT (117 aa). Positions 1113–1128 are enriched in basic and acidic residues; that stretch reads ISDRRGSGKPRPKSEG. A compositionally biased stretch (polar residues) spans 1132-1143; it reads YNNSTQNGSPES. The segment covering 1152 to 1172 has biased composition (basic and acidic residues); sequence SEPKKLPGDDRLMKNRADHRS. Polar residues predominate over residues 1190-1210; the sequence is ASGTTAKITSVSTGNLCTEEQ. A phosphothreonine mark is found at Thr1211 and Thr1232. 3 disordered regions span residues 1235 to 1473, 1501 to 1528, and 1569 to 1824; these read ASKS…LQRP, SKEE…EKQQ, and RLQE…LNTK. Ser1238 is modified (phosphoserine). 2 stretches are compositionally biased toward basic and acidic residues: residues 1252–1262 and 1274–1302; these read YEEKPHMHTDS and RSQE…KSDS. Ser1275 is modified (phosphoserine). A compositionally biased stretch (low complexity) spans 1309-1318; sequence SSSLDSSTSS. Over residues 1325–1337 the composition is skewed to polar residues; that stretch reads SSKSVTPASTLTK. Ser1328 carries the post-translational modification Phosphoserine. The residue at position 1330 (Thr1330) is a Phosphothreonine. Residues 1345 to 1356 are compositionally biased toward low complexity; the sequence is TPAAIPATPVAV. Positions 1364–1373 are enriched in pro residues; sequence LPPPPPPPPV. Residues 1407 to 1441 show a composition bias toward basic and acidic residues; that stretch reads AERRKREEHQRWYEKEKARLEEERERKRREQERKL. Positions 1408 to 1448 form a coiled coil; it reads ERRKREEHQRWYEKEKARLEEERERKRREQERKLGQMRTQS. 2 positions are modified to phosphoserine: Ser1501 and Ser1512. The span at 1515–1528 shows a compositional bias: basic and acidic residues; sequence PWKRDAKEKLEKQQ. The stretch at 1523-1667 forms a coiled coil; that stretch reads KLEKQQQMHI…SRLEAERRRQ (145 aa). The span at 1578–1589 shows a compositional bias: acidic residues; it reads EDDEEEEDDDVD. The segment covering 1597–1677 has biased composition (basic and acidic residues); it reads LEAERRARLQ…HDEAARRLLE (81 aa). The segment covering 1694–1709 has biased composition (pro residues); the sequence is PPSPSPAPGAPPPPPQ. Ser1696, Ser1721, Ser1774, Ser1779, and Ser1799 each carry phosphoserine. Positions 1762–1776 are enriched in basic and acidic residues; it reads DACRDAKEKRSKSQD. Residue Lys1807 is modified to N6-acetyllysine. Residues 1813–1824 show a composition bias toward basic and acidic residues; it reads KLTELENELNTK.

As to quaternary structure, homodimer. Interacts with F-actin, nectin and NECTIN3. Essential for the association of nectin and E-cadherin. Isoform 1/s-afadin does not interact with F-actin. Interacts with ZO-1 and occludin, but probably in an indirect manner. Interacts with RIT1 and RIT2. Interacts with NRXN1 and BCR. Interacts with ADAM10; the interaction locks ADAM10 at adherens junctions following ADAM10 recruitment to adherens junctions by TSPAN33.

It localises to the cell junction. Its subcellular location is the adherens junction. In terms of biological role, belongs to an adhesion system, probably together with the E-cadherin-catenin system, which plays a role in the organization of homotypic, interneuronal and heterotypic cell-cell adherens junctions (AJs). Nectin- and actin-filament-binding protein that connects nectin to the actin cytoskeleton. May play a key role in the organization of epithelial structures of the embryonic ectoderm. Essential for the organization of adherens junctions. In Homo sapiens (Human), this protein is Afadin.